The chain runs to 453 residues: Charged multivesicular body protein 7 (453 aa).

Residues 1 to 22 (MWSPEREAEAPAGGDPAGLLPP) are disordered. The segment covering 10 to 22 (APAGGDPAGLLPP) has biased composition (low complexity). Phosphoserine is present on serine 232. Positions 243–312 (QLMQSEQLLS…DTVQGILDRI (70 aa)) form a coiled coil. Positions 392 to 403 (TKEPLDLPDNPR) are enriched in basic and acidic residues. 2 disordered regions span residues 392–417 (TKEPLDLPDNPRNRHFTNSVPNPRIS) and 431–453 (SEGGLVPSSKSPKRQLEPTLKPL). Threonine 408 is subject to Phosphothreonine. Serine 410, serine 417, serine 431, and serine 441 each carry phosphoserine.

The protein belongs to the SNF7 family. In terms of assembly, interacts with CHMP4B, but not with VPS25. Interacts with LEMD2 (via C-terminus).

It localises to the cytoplasm. The protein resides in the nucleus envelope. In terms of biological role, ESCRT-III-like protein required to recruit the ESCRT-III complex to the nuclear envelope (NE) during late anaphase. Together with SPAST, the ESCRT-III complex promotes NE sealing and mitotic spindle disassembly during late anaphase. Recruited to the reforming NE during anaphase by LEMD2. Plays a role in the endosomal sorting pathway. This chain is Charged multivesicular body protein 7 (CHMP7), found in Homo sapiens (Human).